The following is a 417-amino-acid chain: DLTYYTPEYQTKDTDILAAFRMTPQPGVPAEEAGAAVAAESSTGTWTTVWTDGLTTLDRYKGRCYDIEPVPGEENQYIAYVAYPLDLFEEGSVTNMFTSIVGNVFGFKALRALRLEDLRIPPAYPKTFIGPPHGIQVERDKLNKYGRPLLGCTIKPKLGLSAKNYGRAVYECLRGGLDFTKDDENVNSQPFMRWRDRFLFVAEALFKALAETGEIKGHYLNATAGTSEEMMKRARFARELGAPIVMHDYLTGGFTANTSLAFYCRDNGLLLHIHRAMHAVIDRQRNHGMHFRVLAKALRMSGGDHIHAGTVVGKLEGEREVTLGFVDLLRDDYIEKDRSRGIYFTQDWVSMPGVIPVASGGIHVWHMPALTEIFGDDAVLQFCGGTLGHPWGNAPGAVANRVALEACVQARNEGRDL.

Residues Asn103 and Thr153 each contribute to the substrate site. Catalysis depends on Lys155, which acts as the Proton acceptor. Lys157 lines the substrate pocket. The Mg(2+) site is built by Lys181, Asp183, and Glu184. Lys181 is subject to N6-carboxylysine. Catalysis depends on His274, which acts as the Proton acceptor. 3 residues coordinate substrate: Arg275, His307, and Ser359.

This sequence belongs to the RuBisCO large chain family. Type I subfamily. As to quaternary structure, heterohexadecamer of 8 large chains and 8 small chains. It depends on Mg(2+) as a cofactor.

Its subcellular location is the plastid. It is found in the chloroplast. It catalyses the reaction 2 (2R)-3-phosphoglycerate + 2 H(+) = D-ribulose 1,5-bisphosphate + CO2 + H2O. The enzyme catalyses D-ribulose 1,5-bisphosphate + O2 = 2-phosphoglycolate + (2R)-3-phosphoglycerate + 2 H(+). Its function is as follows. RuBisCO catalyzes two reactions: the carboxylation of D-ribulose 1,5-bisphosphate, the primary event in carbon dioxide fixation, as well as the oxidative fragmentation of the pentose substrate in the photorespiration process. Both reactions occur simultaneously and in competition at the same active site. The sequence is that of Ribulose bisphosphate carboxylase large chain from Acrostichum aureum (Golden leather fern).